A 1079-amino-acid chain; its full sequence is Integrator complex subunit 3 homolog (1079 aa).

Disordered regions lie at residues 544-574 (ETEA…DDLP), 925-949 (YPSS…TPSA), and 1010-1079 (AVGR…NDSD). Residues 938-949 (KGSSAASSTPSA) show a composition bias toward low complexity. A phosphoserine mark is found at Ser-1049, Ser-1050, Ser-1054, and Ser-1055. Over residues 1062 to 1073 (HKITQAAKKRKK) the composition is skewed to basic residues.

Belongs to the Integrator subunit 3 family. In terms of assembly, belongs to the multiprotein complex Integrator, at least composed of IntS1, IntS2, IntS3, IntS4, omd/IntS5, IntS6, defl/IntS7, IntS8, IntS9, IntS10, IntS11, IntS12, asun/IntS13, IntS14 and IntS15. The core complex associates with protein phosphatase 2A subunits mts/PP2A and Pp2A-29B, to form the Integrator-PP2A (INTAC) complex.

It is found in the nucleus. The protein localises to the cytoplasm. Functionally, component of the integrator complex, a multiprotein complex that terminates RNA polymerase II (Pol II) transcription in the promoter-proximal region of genes. The integrator complex provides a quality checkpoint during transcription elongation by driving premature transcription termination of transcripts that are unfavorably configured for transcriptional elongation: the complex terminates transcription by (1) catalyzing dephosphorylation of the C-terminal domain (CTD) of Pol II subunit Polr2A/Rbp1 and Spt5, and (2) degrading the exiting nascent RNA transcript via endonuclease activity. The integrator complex is also involved in the 3'-end processing of the U7 snRNA, and also the spliceosomal snRNAs U1, U2, U4 and U5. In Drosophila mojavensis (Fruit fly), this protein is Integrator complex subunit 3 homolog (IntS3).